The primary structure comprises 774 residues: Fe(3+) dicitrate transport protein FecA (774 aa).

A signal peptide spans 1–33 (MTPLRVFRKTTPLVNTIRLSLLPLAGLSFSAFA). A TonB box motif is present at residues 56–63 (FTLSVDAS). The TBDR plug domain maps to 129-250 (DVFEHAGARD…VGGVVNFVTR (122 aa)). Residues 255-774 (DFGIEAGVEG…TLYMQGSLKF (520 aa)) form the TBDR beta-barrel domain. Positions 757–774 (GIYAGQPRTLYMQGSLKF) match the TonB C-terminal box motif.

The protein belongs to the TonB-dependent receptor family. In terms of assembly, interacts (via periplasmic N-terminus) with FecR (via periplasmic C-terminus).

The protein localises to the cell outer membrane. Its function is as follows. FecA is the outer membrane receptor protein in the Fe(3+) dicitrate transport system. The sequence is that of Fe(3+) dicitrate transport protein FecA (fecA) from Escherichia coli (strain K12).